Here is a 55-residue protein sequence, read N- to C-terminus: Myrmicitoxin(1)-Pr6b (55 aa).

Residues 1-22 (MKIIYAFLLIAVVAFMGSGIMA) form the signal peptide. Residues 23–29 (ESLAEAI) constitute a propeptide that is removed on maturation.

The protein belongs to the formicidae venom clade 4 family. As to expression, expressed by the venom gland.

It localises to the secreted. Functionally, probable neurotoxin. The polypeptide is Myrmicitoxin(1)-Pr6b (Pogonomyrmex rugosus (Desert harvester ant)).